Here is a 411-residue protein sequence, read N- to C-terminus: Heparan-sulfate 6-O-sulfotransferase 1 (411 aa).

Topologically, residues 11–17 (MVERASK) are cytoplasmic. The chain crosses the membrane as a helical; Signal-anchor for type II membrane protein span at residues 18 to 37 (FVLVVAGSVCFMLILYQYAG). Over 38–411 (PGLSLGAPGG…DYMSHIIEKW (374 aa)) the chain is Lumenal. Residue 93 to 101 (HIQKTGGTT) coordinates 3'-phosphoadenylyl sulfate. Residues 123 to 124 (KK), Arg140, Trp145, and His150 contribute to the substrate site. His150 functions as the Proton acceptor in the catalytic mechanism. Positions 185 and 193 each coordinate 3'-phosphoadenylyl sulfate. Residues His197 and Trp204 each coordinate substrate. Residue Asn264 is glycosylated (N-linked (GlcNAc...) asparagine). 317-319 (MQY) contacts 3'-phosphoadenylyl sulfate. Residue Asn320 is glycosylated (N-linked (GlcNAc...) asparagine). 323 to 324 (RA) lines the 3'-phosphoadenylyl sulfate pocket. A coiled-coil region spans residues 352-387 (KDLFQQRYQYKRQLERREQRLRSREERLLHRAKEAL).

Belongs to the sulfotransferase 6 family. N-glycosylated. In terms of tissue distribution, expressed in fetal brain.

Its subcellular location is the membrane. The enzyme catalyses alpha-D-glucosaminyl-[heparan sulfate](n) + 3'-phosphoadenylyl sulfate = 6-sulfo-alpha-D-glucosaminyl-[heparan sulfate](n) + adenosine 3',5'-bisphosphate + H(+). Its function is as follows. 6-O-sulfation enzyme which catalyzes the transfer of sulfate from 3'-phosphoadenosine 5'-phosphosulfate (PAPS) to position 6 of the N-sulfoglucosamine residue (GlcNS) of heparan sulfate. Critical for normal neuronal development where it may play a role in neuron branching. May also play a role in limb development. May prefer iduronic acid. The sequence is that of Heparan-sulfate 6-O-sulfotransferase 1 from Homo sapiens (Human).